A 978-amino-acid chain; its full sequence is MSWARNIQSRIQQQQQLQKPGGLAPPSGNETPQKQPSSPTLSALSSPITSLTNALRGSGGISQPTTNTTSLTSTSPPSPTISTTTTQVKVGQTSFTTSTNLQAAASGNNLQASIQTTNITVTSPSMASPIGTSTGIQNPNAKPSSLPSPSQSPMQTRNTSAPTNNNNNNNTATTTTPTTTTTTTTTTTTTTTTTTTPSTSTTTTPTTSSSNLGQIQQQPPTLQQQQQQIQQQQQQQPTPIKQTTPYIFPNKIQPKSLTTDMFRGSEFSHVTFVEDLTRKLVNDQMGADGLHFEPAPFNQLFLNTQLQLSQLESNIDRRLDDLAEECNDFSYDYKRKLQDLTGSYQECFQHFKKLEKGVNTIGTKAVHFGDELDSVNQQKVKAQGALSLINYLLELNSVGASSEENGGITKRSDIFTNSDRIHELAHLVKKLSSVSEDIKEISGFKQGKLETESISNSLENDLLNQFERAAERNDYDKMKQCATTLHGFNGGERCRSRYIQKLKMFFDIDSFRKDENLANNITKRLIRGNNIVDTRFEIFYTDILKDVSHEQMVIQNVFVNQTSAMAMLIIRLFEQRVRLFIENVLSLESNNVSMFLQTVHYAFNSTKKLLVDPLQSYGIVGVDLNQLLNSIFYQYQEGYIQKETTYLVSLFQSNVVEECERLQTLDRYSMYLEDGLNPEITQMFVQQTENALTRSYTLSLDNILADNIKTIFFLMLEYLFEKYSMFVLNKYIELPMIPSSSSNVDTKSIQDSISQLFRVVLSINQIVGQIQSMFQVFVLPHIQTSMIVQSQCSDQLYFNISSLENTINTGLENSLTTMIQLIEKTLLPQGRNDYLIDDYDNSVTDTCASVIKLIQSFYDMAKINLQGKNFHIYVEELGLKSQFVFINHFKKFKIGQGIGTLKLMRDLTEYRNLSKQFKSQKVDDAFELLFEISKLHLVNPENFKLVIEGGALTRMSKQDLIIFIKQRSDFKSIWLDTL.

Residues 1 to 11 show a composition bias toward polar residues; it reads MSWARNIQSRI. Disordered regions lie at residues 1–87 and 122–246; these read MSWA…TTTQ and TSPS…TTPY. Low complexity-rich tracts occupy residues 36–52 and 62–86; these read PSSPTLSALSSPITSLT and SQPTTNTTSLTSTSPPSPTISTTTT. The span at 122-142 shows a compositional bias: polar residues; sequence TSPSMASPIGTSTGIQNPNAK. Over residues 143–245 the composition is skewed to low complexity; the sequence is PSSLPSPSQS…QPTPIKQTTP (103 aa). Residues 303 to 325 are a coiled coil; the sequence is NTQLQLSQLESNIDRRLDDLAEE.

It belongs to the SEC10 family. In terms of assembly, the exocyst complex is composed of sec3/exoc1, sec5/exoc2, sec6/exoc3, sec8/exoc4, sec10/exoc5, sec15/exoc6, exo70/exoc7 and exo84/exoc8.

In terms of biological role, component of the exocyst complex involved in the docking of exocytic vesicles with fusion sites on the plasma membrane. The polypeptide is Exocyst complex component 5 (exoc5) (Dictyostelium discoideum (Social amoeba)).